Here is a 209-residue protein sequence, read N- to C-terminus: Uridine kinase (209 aa).

12 to 19 (GGSGGGKT) contributes to the ATP binding site.

It belongs to the uridine kinase family.

The protein localises to the cytoplasm. It carries out the reaction uridine + ATP = UMP + ADP + H(+). The enzyme catalyses cytidine + ATP = CMP + ADP + H(+). It participates in pyrimidine metabolism; CTP biosynthesis via salvage pathway; CTP from cytidine: step 1/3. Its pathway is pyrimidine metabolism; UMP biosynthesis via salvage pathway; UMP from uridine: step 1/1. This Streptococcus agalactiae serotype V (strain ATCC BAA-611 / 2603 V/R) protein is Uridine kinase.